Reading from the N-terminus, the 169-residue chain is Glycine-rich RNA-binding protein 8 (169 aa).

In terms of domain architecture, RRM spans 6–84 (YRCFVGGLAW…RVITVNEAQS (79 aa)). ADP-ribosylarginine; by HopU1 is present on Arg47. Positions 80-99 (NEAQSRGSGGGGGGRGGSGG) are disordered. Residues 86–99 (GSGGGGGGRGGSGG) show a composition bias toward gly residues. The interval 86 to 168 (GSGGGGGGRG…GGSYGGGGGG (83 aa)) is glycine-rich (GR) required for cell-to-cell movement. Residues 95-143 (GGSGGGYRSGGGGGYSGGGGGGYSGGGGGGYERRSGGYGSGGGGGGRGY) form a nuclear targeting sequence (M9) region. A Phosphoserine modification is found at Ser103. Positions 130–169 (GGYGSGGGGGGRGYGGGGRREGGGYGGGDGGSYGGGGGGW) are disordered.

It belongs to the GR-RBP family. In terms of assembly, interacts with TRN1. Binds to small phloem-mobile single-stranded RNAs (ss-sRNA, e.g. small interfering RNA (siRNA) and microRNA (miRNA)) in the phloeme exudate, including viral-derived sRNA (vsiRNA). In terms of processing, ADP-ribosylated by the Pseudomonas syringae type III effector HopU1. ADP-ribosylation reduces the ability of the protein to bind RNA. Ubiquitous.

The protein localises to the cytoplasm. The protein resides in the nucleus. It is found in the secreted. Plays a role in RNA transcription or processing during stress. Binds RNAs and DNAs sequence with a preference to single-stranded nucleic acids. Involved in mRNA alternative splicing of numerous targets by modulating splice site selection. Negatively regulates the circadian oscillations of its own transcript as well as RBG7 transcript. Forms an interlocked post-transcriptional negative feedback loop with the RBG7 autoregulatory circuit. Both proteins negatively autoregulate and reciprocally crossregulate by binding to their pre-mRNAs and promoting unproductive splicing coupled to degradation via the NMD pathway. Target of the Pseudomonas syringae type III effector HopU1. Mediates cell-to-cell trafficking of RNA interference (RNAi) signals (small RNAs (sRNA), e.g. small interfering RNA (siRNA) and microRNA (miRNA)) which regulate growth and development, as well as responses to environmental inputs, including pathogen attack; can compromise zucchini yellow mosaic virus (ZYMV) and tobacco rattle virus (TRV) infections at the early stage. The polypeptide is Glycine-rich RNA-binding protein 8 (Arabidopsis thaliana (Mouse-ear cress)).